We begin with the raw amino-acid sequence, 319 residues long: Mas-related G-protein coupled receptor member D (319 aa).

The Extracellular portion of the chain corresponds to 1 to 30; sequence MNYTPYSSPAPGLTISPTMDPVTWVYFSVT. A helical membrane pass occupies residues 31-51; it reads FLAMATCVCGIVGNSMVIWLL. Topologically, residues 52–64 are cytoplasmic; the sequence is SFHRVQRSPFCTY. A helical membrane pass occupies residues 65-85; it reads VLNLAVADLLFLLCMASLLSL. Residues 86-92 are Extracellular-facing; the sequence is ETGPLLT. Residues 93–113 form a helical membrane-spanning segment; the sequence is ASTSARVYEGMKRIKYFAYTA. The Cytoplasmic portion of the chain corresponds to 114–144; the sequence is GLSLLTAISTQRCLSVLFPIWYKCHRPQHLS. Residues 145–165 traverse the membrane as a helical segment; it reads GVVCGVLWALALLMNFLASFF. At 166–184 the chain is on the extracellular side; that stretch reads CVQFWHPDKYQCFKVDMVF. A helical transmembrane segment spans residues 185–205; it reads NSLILGIFMPVMVLTSAIIFI. Over 206 to 220 the chain is Cytoplasmic; sequence RMRKNSLLQRRQPRR. The helical transmembrane segment at 221–241 threads the bilayer; that stretch reads LYVVILTSVLVFLTCSLPLGI. The Extracellular segment spans residues 242-260; the sequence is NWFLLYWVELPQAVRLLYV. The chain crosses the membrane as a helical span at residues 261–281; the sequence is CSSRFSSSLSSSANPVIYFLV. Residues 282-319 are Cytoplasmic-facing; that stretch reads GSQKSHRLQESLGAVLGRALQDEPEGRETPSTCTNDGV.

This sequence belongs to the G-protein coupled receptor 1 family. Mas subfamily. Co-expressed in the small diameter neurons with P2X3 and VR1 in dorsal root ganglia.

The protein resides in the cell membrane. Functionally, may regulate nociceptor function and/or development, including the sensation or modulation of pain. Functions as a specific membrane receptor for beta-alanine. The receptor couples with G-protein G(q) and G(i). This is Mas-related G-protein coupled receptor member D (Mrgprd) from Rattus norvegicus (Rat).